Consider the following 60-residue polypeptide: Large ribosomal subunit protein bL32 (60 aa).

Residues 1-16 are compositionally biased toward basic residues; sequence MAVPRRKTSPSRRGMR. The tract at residues 1-60 is disordered; sequence MAVPRRKTSPSRRGMRRSADAIKRPTYVEDKDSGELRRPHHLDLKTGMYKGRQVLKKKDS. Basic and acidic residues predominate over residues 17 to 44; it reads RSADAIKRPTYVEDKDSGELRRPHHLDL.

The chain is Large ribosomal subunit protein bL32 from Rhodopseudomonas palustris (strain ATCC BAA-98 / CGA009).